Here is an 846-residue protein sequence, read N- to C-terminus: Translation initiation factor IF-2 (846 aa).

One can recognise a tr-type G domain in the interval Ser-345–Glu-512. The interval Gly-354–Thr-361 is G1. Position 354–361 (Gly-354–Thr-361) interacts with GTP. The tract at residues Gly-379 to His-383 is G2. Residues Asp-400 to Gly-403 are G3. Residues Asp-400 to His-404 and Asn-454 to Asp-457 each bind GTP. The interval Asn-454–Asp-457 is G4. The tract at residues Ser-490 to Lys-492 is G5.

It belongs to the TRAFAC class translation factor GTPase superfamily. Classic translation factor GTPase family. IF-2 subfamily.

Its subcellular location is the cytoplasm. One of the essential components for the initiation of protein synthesis. Protects formylmethionyl-tRNA from spontaneous hydrolysis and promotes its binding to the 30S ribosomal subunits. Also involved in the hydrolysis of GTP during the formation of the 70S ribosomal complex. The sequence is that of Translation initiation factor IF-2 from Francisella tularensis subsp. holarctica (strain FTNF002-00 / FTA).